The primary structure comprises 120 residues: U-scoloptoxin(20)-Cw1a (120 aa).

The signal sequence occupies residues 1–26 (MNSTDRLLGVLLAVVALILLIRISEA). The disordered stretch occupies residues 87 to 106 (SSGKSLTTTKDSSESRKKEI). Residues 97–106 (DSSESRKKEI) are compositionally biased toward basic and acidic residues.

Belongs to the scoloptoxin-20 family. Post-translationally, contains 3 disulfide bonds. As to expression, expressed by the venom gland.

The protein localises to the secreted. The sequence is that of U-scoloptoxin(20)-Cw1a from Cormocephalus westwoodi (Westwood's green centipede).